We begin with the raw amino-acid sequence, 173 residues long: Large ribosomal subunit protein uL18 (173 aa).

It belongs to the universal ribosomal protein uL18 family. In terms of assembly, part of the 50S ribosomal subunit. Contacts the 5S and 23S rRNAs.

This is one of the proteins that bind and probably mediate the attachment of the 5S RNA into the large ribosomal subunit, where it forms part of the central protuberance. The protein is Large ribosomal subunit protein uL18 of Methanococcoides burtonii (strain DSM 6242 / NBRC 107633 / OCM 468 / ACE-M).